A 1328-amino-acid polypeptide reads, in one-letter code: WASH complex subunit 2 (1328 aa).

The sufficient for interaction with WASHC3, WASHC4 and WASHC5; required for interaction with WASHC1 stretch occupies residues 1-219; the sequence is MNRTSPDSEQ…VGSDRGSIVD (219 aa). Ser-157, Ser-159, Ser-204, Ser-205, and Ser-209 each carry phosphoserine. Over residues 201–213 the composition is skewed to low complexity; sequence GELSSEEGSVGSD. 2 disordered regions span residues 201-655 and 675-830; these read GELS…KTNL and KKTQ…PKST. 2 stretches are compositionally biased toward acidic residues: residues 219-231 and 248-273; these read DSEDEKEEEESDD and SDEEEDDDADLFADSEKEGDDIEDIE. Ser-283 is modified (phosphoserine). Over residues 288 to 323 the composition is skewed to basic and acidic residues; the sequence is LAARIKGDVSNQRKEGHTDGKPQRTVKEKKERRTPA. A Phosphothreonine modification is found at Thr-321. The interval 346-592 is sufficient for interaction with CCDC93; the sequence is SRGGLFSDRQ…QTSSLPPQSQ (247 aa). The tract at residues 347-1328 is interaction with VPS35; it reads RGGLFSDRQG…DDPLNAFGSQ (982 aa). The short motif at 357 to 367 is the LFa 1 element; sequence LFDDDDESDLF. Residues Ser-384 and Ser-387 each carry the phosphoserine modification. Short sequence motifs (LFa) lie at residues 440–455 and 474–483; these read LFDDDDNDSDEDDNFF and IFDDDEGDLF. Residues 441-453 show a composition bias toward acidic residues; the sequence is FDDDDNDSDEDDN. A compositionally biased stretch (polar residues) spans 508 to 528; that stretch reads TITLPSSKNPKLVSETKTQKG. Short sequence motifs (LFa) lie at residues 529–540 and 564–575; these read LFSDEEDSEDLF and LFGDEDEEDNLF. A phosphoserine mark is found at Ser-531 and Ser-536. Over residues 539 to 556 the composition is skewed to low complexity; that stretch reads LFSSQSSSKTKSASVLSS. Residues 582–592 are compositionally biased toward polar residues; it reads KQTSSLPPQSQ. Residues Ser-610 and Ser-611 each carry the phosphoserine modification. Basic and acidic residues predominate over residues 627 to 638; the sequence is ASERKSKGERWD. 2 consecutive short sequence motifs (LFa) follow at residues 655-667 and 683-695; these read LFEEEDDDGVDLF and LFEDDTDSGSSLF. Positions 690-699 are enriched in polar residues; it reads SGSSLFSLPP. 5 positions are modified to phosphoserine: Ser-720, Ser-744, Ser-749, Ser-780, and Ser-795. Over residues 797–808 the composition is skewed to acidic residues; the sequence is FDEDEDKVEDDS. 2 consecutive short sequence motifs (LFa) follow at residues 832–840 and 849–855; these read VFQDEELLF and DPDVDLF. Disordered regions lie at residues 863–940 and 991–1088; these read LSMP…EPSS and PTLP…AMAV. A phosphoserine mark is found at Ser-867 and Ser-870. Positions 871 to 881 match the LFa 10 motif; sequence LFGDDDDDDLF. The span at 894-919 shows a compositional bias: basic and acidic residues; sequence PEKKGTLRKDHKPPELTEGSKEKSTW. Residues 925 to 1328 are interaction with phospholipids; that stretch reads QDSSGLTPFK…DDPLNAFGSQ (404 aa). Residues 1016 to 1034 are compositionally biased toward basic residues; sequence NKGRVKVRGKRRPQTRAAR. Residues 1017-1035 form a required for interaction with F-actin-capping protein subunit alpha (CAPZA1 or CAPZA2 or CAPZA3) region; that stretch reads KGRVKVRGKRRPQTRAARR. Phosphoserine occurs at positions 1042, 1060, 1077, and 1102. Residues 1115–1210 form a disordered region; it reads AHLFDSGDIF…KKNQWKSDSH (96 aa). 3 short sequence motifs (LFa) span residues 1117–1124, 1157–1171, and 1187–1195; these read LFDSGDIF, VFPDLSEASGVDDLF, and LLEDEEDLF. Phosphoserine occurs at positions 1162 and 1165. The span at 1196–1210 shows a compositional bias: basic and acidic residues; the sequence is ADQKGKKNQWKSDSH. Short sequence motifs (LFa) lie at residues 1220–1226, 1249–1257, and 1277–1286; these read IFEDDIF, LFDDNIDIF, and MFDDDTDDIF. The interval 1289–1310 is disordered; it reads GLQAKASKPKSQSAEAVSELRS. The short motif at 1317 to 1325 is the LFa 17 element; it reads IFDDPLNAF. Position 1327 is a phosphoserine (Ser-1327).

It belongs to the FAM21 family. Component of the WASH core complex also described as WASH regulatory complex (SHRC) composed of WASHC1, WASHC2, WASHC3, WASHC4 and WASHC5; in the complex interacts (via N-terminus) directly with WASHC1. The WASH core complex associates with the F-actin-capping protein dimer (formed by CAPZA1, CAPZA2 or CAPZA3 and CAPZB) in a transient or substoichiometric manner which was initially described as WASH complex. Interacts with VPS35; mediates the association with the retromer CSC complex. Interacts with FKBP15. Interacts with CCDC93, CCDC22, VPS35L; indicative for an association of the WASH core complex with the CCC and retriever complexes. Directly interacts with TBC1D23.

Its subcellular location is the early endosome membrane. It is found in the cell membrane. Acts as a component of the WASH core complex that functions as a nucleation-promoting factor (NPF) at the surface of endosomes, where it recruits and activates the Arp2/3 complex to induce actin polymerization, playing a key role in the fission of tubules that serve as transport intermediates during endosome sorting. Mediates the recruitment of the WASH core complex to endosome membranes via binding to phospholipids and VPS35 of the retromer CSC. Mediates the recruitment of the F-actin-capping protein dimer to the WASH core complex probably promoting localized F-actin polymerization needed for vesicle scission. Via its C-terminus binds various phospholipids, most strongly phosphatidylinositol 4-phosphate (PtdIns-(4)P), phosphatidylinositol 5-phosphate (PtdIns-(5)P) and phosphatidylinositol 3,5-bisphosphate (PtdIns-(3,5)P2). Involved in the endosome-to-plasma membrane trafficking and recycling of SNX27-retromer-dependent cargo proteins, such as GLUT1. Required for the association of DNAJC13, ENTR1, ANKRD50 with retromer CSC subunit VPS35. Required for the endosomal recruitment of CCC and retriever complexes subunits COMMD1 and CCDC93 as well as the retrievere complex subunit VPS35L. The sequence is that of WASH complex subunit 2 from Rattus norvegicus (Rat).